Reading from the N-terminus, the 251-residue chain is MSDIGDWFRSIPAITRYWFAATVAVPLVGKLGLISPAYLFLWPEAFLYRFQIWRPITATFYFPVGPGTGFLYLVNLYFLYHYSTRLETGAFDGRPADYLFMLLFNWICIVITGLAMDMQLLMIPLIMSVLYVWAQLNRDMIVSFWFGTRFKACYLPWVILGFNYIIGGSVINELIGNLVGHLYFFLMFRYPMDLGGRNFLSTPQFLYRWLPSRRGGVSGFGVPPASMRRAADQNGGGGRHNWGQGFRLGDQ.

S2 carries the N-acetylserine modification. The Cytoplasmic portion of the chain corresponds to 2-15; it reads SDIGDWFRSIPAIT. The chain crosses the membrane as a helical span at residues 16 to 31; sequence RYWFAATVAVPLVGKL. At 32–69 the chain is on the lumenal side; the sequence is GLISPAYLFLWPEAFLYRFQIWRPITATFYFPVGPGTG. A helical transmembrane segment spans residues 70–89; the sequence is FLYLVNLYFLYHYSTRLETG. Residues 90–94 are Cytoplasmic-facing; sequence AFDGR. A helical transmembrane segment spans residues 95–115; sequence PADYLFMLLFNWICIVITGLA. The Lumenal segment spans residues 116-122; it reads MDMQLLM. The chain crosses the membrane as a helical span at residues 123 to 137; sequence IPLIMSVLYVWAQLN. The Cytoplasmic segment spans residues 138 to 154; that stretch reads RDMIVSFWFGTRFKACY. The helical transmembrane segment at 155–166 threads the bilayer; that stretch reads LPWVILGFNYII. Residues 167-170 lie on the Lumenal side of the membrane; it reads GGSV. The helical transmembrane segment at 171–189 threads the bilayer; sequence INELIGNLVGHLYFFLMFR. Topologically, residues 190–251 are cytoplasmic; that stretch reads YPMDLGGRNF…WGQGFRLGDQ (62 aa). S201 is subject to Phosphoserine. At T202 the chain carries Phosphothreonine. Position 226 is a phosphoserine (S226). The segment at 229–251 is disordered; the sequence is RAADQNGGGGRHNWGQGFRLGDQ. The short motif at 241–248 is the SHP-box element; the sequence is NWGQGFRL.

It belongs to the derlin family. Homotetramer. The four subunits of the tetramer are arranged in a twofold symmetry. Forms homo- and heterooligomers with DERL2 and DERL3; binding to DERL3 is poorer than that between DERL2 and DERL3. Interacts (via SHP-box motif) with VCP. Interacts with AMFR, SELENOS, SEL1L, SELENOK and SYVN1, as well as with SEL1L-SYVN1 and VCP-SELENOS protein complexes; this interaction is weaker than that observed between DERL2 and these complexes. Interacts with NGLY1 and YOD1. Does not bind to EDEM1. Interacts with DNAJB9. Interacts with RNF103. Interacts with HM13. Interacts with XBP1 isoform 1 (via luminal/ectodomain domain); the interaction obviates the need for ectodomain shedding prior HM13/SPP-mediated XBP1 isoform 1 cleavage. Interacts with the signal recognition particle/SRP and the SRP receptor; in the process of endoplasmic reticulum stress-induced pre-emptive quality control. May interact with UBXN6. Interacts with ZFAND2B; probably through VCP. Interacts with CCDC47. Interacts with C18orf32. May interact with TRAM1. Forms a complex with SVIP and VCP/p97.

The protein localises to the endoplasmic reticulum membrane. Its function is as follows. Functional component of endoplasmic reticulum-associated degradation (ERAD) for misfolded lumenal proteins. Forms homotetramers which encircle a large channel traversing the endoplasmic reticulum (ER) membrane. This allows the retrotranslocation of misfolded proteins from the ER into the cytosol where they are ubiquitinated and degraded by the proteasome. The channel has a lateral gate within the membrane which provides direct access to membrane proteins with no need to reenter the ER lumen first. May mediate the interaction between VCP and the misfolded protein. Also involved in endoplasmic reticulum stress-induced pre-emptive quality control, a mechanism that selectively attenuates the translocation of newly synthesized proteins into the endoplasmic reticulum and reroutes them to the cytosol for proteasomal degradation. By controlling the steady-state expression of the IGF1R receptor, indirectly regulates the insulin-like growth factor receptor signaling pathway. The chain is Derlin-1 from Pongo abelii (Sumatran orangutan).